We begin with the raw amino-acid sequence, 131 residues long: D-ribose pyranase (131 aa).

The active-site Proton donor is the His20. Substrate is bound by residues Asp28, His98, and Tyr120–Asn122.

The protein belongs to the RbsD / FucU family. RbsD subfamily. In terms of assembly, homodecamer.

Its subcellular location is the cytoplasm. The catalysed reaction is beta-D-ribopyranose = beta-D-ribofuranose. It functions in the pathway carbohydrate metabolism; D-ribose degradation; D-ribose 5-phosphate from beta-D-ribopyranose: step 1/2. In terms of biological role, catalyzes the interconversion of beta-pyran and beta-furan forms of D-ribose. The sequence is that of D-ribose pyranase from Clostridium novyi (strain NT).